The chain runs to 268 residues: MQKLHREICGPVGLVPTMGYLHEGHLSLIRASKKQDLNTVASIFVNPTQFGPHEDFKKYPRDEKRDMAMLENAGVDYVFAPSVEEMYPPGFDSWVEPGVLQERLEGAVRPGHFRGVCTVVAKLFTIICPAKAYFGQKDYQQYLIIKKMASDLNLDVSVEMLPIVRESDGLALSSRNTYLSASERKAALVLYRSLLTAKSLFAAKEYNPEIIRRKMTEEIQRESLAEIDYVSLSDQDTLGEADKVSIKTIALVAARFGKTRLIDNMFLA.

18–25 (MGYLHEGH) is a binding site for ATP. The active-site Proton donor is the His-25. Gln-49 is a binding site for (R)-pantoate. A beta-alanine-binding site is contributed by Gln-49. 135–138 (GQKD) contacts ATP. Gln-141 contacts (R)-pantoate. Residues Val-164 and 172-175 (LSSR) each bind ATP.

It belongs to the pantothenate synthetase family. As to quaternary structure, homodimer.

It localises to the cytoplasm. The enzyme catalyses (R)-pantoate + beta-alanine + ATP = (R)-pantothenate + AMP + diphosphate + H(+). The protein operates within cofactor biosynthesis; (R)-pantothenate biosynthesis; (R)-pantothenate from (R)-pantoate and beta-alanine: step 1/1. Catalyzes the condensation of pantoate with beta-alanine in an ATP-dependent reaction via a pantoyl-adenylate intermediate. The chain is Pantothenate synthetase from Dehalococcoides mccartyi (strain ATCC BAA-2266 / KCTC 15142 / 195) (Dehalococcoides ethenogenes (strain 195)).